Reading from the N-terminus, the 270-residue chain is MFTILLSLAILVFVPFLYKANRNTKDVKVNTISIDQKDGLPARKKLNILHLSDLHLENISVSPEELYHLTKDQPVDIIALTGDFLDRKRNIPKLAGYLNALQKLKPAYGMYAVFGNHDYVLKEEDFQRLKRVLEENGCITLQNEHVRIETAAGPVNIIGIDDYSTNRSNITGSYQSLENGYHLVLTHDPNIILDMKDVHYDYLLSGHFHGGQIHWPKPYHLVKMGKLVRMNMIKGLHYHHDKPFYISEGLGQTGVNIRVGSRPEVTFHQI.

The a divalent metal cation site is built by Asp-53, His-55, Asp-83, Asn-116, His-207, and His-209.

This sequence belongs to the metallophosphoesterase superfamily. A divalent metal cation is required as a cofactor.

This is an uncharacterized protein from Bacillus subtilis (strain 168).